The chain runs to 555 residues: Hdr-like menaquinol oxidoreductase iron-sulfur subunit 2 (555 aa).

2 4Fe-4S ferredoxin-type domains span residues 82-111 (RSFK…GDPK) and 151-180 (KELY…AEIV). Cys91, Cys94, Cys97, Cys101, Cys160, Cys163, Cys166, and Cys170 together coordinate [4Fe-4S] cluster.

In terms of assembly, consists of five subunits: an integral membrane subunit, a cytochrome b-like subunit, a cytochrome c subunit and two iron-sulfur subunits. [4Fe-4S] cluster serves as cofactor.

The protein localises to the cell membrane. Functionally, has menaquinol-oxidizing activity. HmeC and HmeD subunits may together mediate electron transfer from menaquinol to an unidentified electron acceptor on the cytoplasmic side of the membrane. The chain is Hdr-like menaquinol oxidoreductase iron-sulfur subunit 2 (hmeD) from Archaeoglobus fulgidus (strain ATCC 49558 / DSM 4304 / JCM 9628 / NBRC 100126 / VC-16).